Consider the following 265-residue polypeptide: uncharacterized protein (265 aa).

Glu-47 is an active-site residue.

The protein belongs to the PhzF family.

This is an uncharacterized protein from Halalkalibacterium halodurans (strain ATCC BAA-125 / DSM 18197 / FERM 7344 / JCM 9153 / C-125) (Bacillus halodurans).